A 338-amino-acid polypeptide reads, in one-letter code: Probable O-antigen biosynthesis glycosyltransferase WbiN (338 aa).

It belongs to the glycosyltransferase group 1 family. Glycosyltransferase 4 subfamily.

It catalyses the reaction N-acetyl-alpha-D-galactosaminyl-di-trans,octa-cis-undecaprenyl diphosphate + UDP-N-acetyl-alpha-D-galactosamine = alpha-D-GalNAc-(1-&gt;3)-alpha-D-GalNAc-di-trans,octa-cis-undecaprenyl diphosphate + UDP + H(+). Its pathway is bacterial outer membrane biogenesis; LPS O-antigen biosynthesis. Its function is as follows. Involved in the assembly of the O-repeating unit during O-antigen biosynthesis. This chain is Probable O-antigen biosynthesis glycosyltransferase WbiN, found in Escherichia coli.